A 456-amino-acid polypeptide reads, in one-letter code: NAD-dependent deacetylase sir2C (456 aa).

Positions isoleucine 161 to aspartate 443 constitute a Deacetylase sirtuin-type domain. Histidine 294 serves as the catalytic Proton acceptor. Residues cysteine 302, cysteine 305, cysteine 331, and cysteine 336 each contribute to the Zn(2+) site.

This sequence belongs to the sirtuin family. Requires Zn(2+) as cofactor.

It carries out the reaction N(6)-acetyl-L-lysyl-[protein] + NAD(+) + H2O = 2''-O-acetyl-ADP-D-ribose + nicotinamide + L-lysyl-[protein]. Functionally, NAD-dependent deacetylase, which plays an important role in the regulation of transcriptional repression. This is NAD-dependent deacetylase sir2C (sir2C) from Dictyostelium discoideum (Social amoeba).